A 212-amino-acid chain; its full sequence is Orotate phosphoribosyltransferase (212 aa).

5-phospho-alpha-D-ribose 1-diphosphate-binding positions include Arg-97, Lys-101, His-103, and 123 to 131 (DDLISTGGS). An orotate-binding site is contributed by Ser-127.

It belongs to the purine/pyrimidine phosphoribosyltransferase family. PyrE subfamily. In terms of assembly, homodimer. Requires Mg(2+) as cofactor.

It carries out the reaction orotidine 5'-phosphate + diphosphate = orotate + 5-phospho-alpha-D-ribose 1-diphosphate. It functions in the pathway pyrimidine metabolism; UMP biosynthesis via de novo pathway; UMP from orotate: step 1/2. Catalyzes the transfer of a ribosyl phosphate group from 5-phosphoribose 1-diphosphate to orotate, leading to the formation of orotidine monophosphate (OMP). The chain is Orotate phosphoribosyltransferase from Lactiplantibacillus plantarum (strain ATCC BAA-793 / NCIMB 8826 / WCFS1) (Lactobacillus plantarum).